Here is a 138-residue protein sequence, read N- to C-terminus: Nucleoside diphosphate kinase (138 aa).

Residues K10, F58, R86, T92, R103, and N113 each coordinate ATP. H116 serves as the catalytic Pros-phosphohistidine intermediate.

The protein belongs to the NDK family. As to quaternary structure, homotetramer. The cofactor is Mg(2+).

The protein localises to the cytoplasm. It catalyses the reaction a 2'-deoxyribonucleoside 5'-diphosphate + ATP = a 2'-deoxyribonucleoside 5'-triphosphate + ADP. The catalysed reaction is a ribonucleoside 5'-diphosphate + ATP = a ribonucleoside 5'-triphosphate + ADP. Functionally, major role in the synthesis of nucleoside triphosphates other than ATP. The ATP gamma phosphate is transferred to the NDP beta phosphate via a ping-pong mechanism, using a phosphorylated active-site intermediate. The chain is Nucleoside diphosphate kinase from Glaesserella parasuis serovar 5 (strain SH0165) (Haemophilus parasuis).